Consider the following 517-residue polypeptide: UDP-N-acetylmuramoyl-tripeptide--D-alanyl-D-alanine ligase (517 aa).

138 to 144 (GSSGKTS) is an ATP binding site.

The protein belongs to the MurCDEF family. MurF subfamily.

It is found in the cytoplasm. It catalyses the reaction D-alanyl-D-alanine + UDP-N-acetyl-alpha-D-muramoyl-L-alanyl-gamma-D-glutamyl-meso-2,6-diaminopimelate + ATP = UDP-N-acetyl-alpha-D-muramoyl-L-alanyl-gamma-D-glutamyl-meso-2,6-diaminopimeloyl-D-alanyl-D-alanine + ADP + phosphate + H(+). It functions in the pathway cell wall biogenesis; peptidoglycan biosynthesis. Functionally, involved in cell wall formation. Catalyzes the final step in the synthesis of UDP-N-acetylmuramoyl-pentapeptide, the precursor of murein. The protein is UDP-N-acetylmuramoyl-tripeptide--D-alanyl-D-alanine ligase of Mycobacterium leprae (strain TN).